The chain runs to 901 residues: Protein translocase subunit SecA (901 aa).

ATP is bound by residues Q87, G105–T109, and D512. The interval H859–Q901 is disordered. 4 residues coordinate Zn(2+): C885, C887, C896, and H897. Residues K891–Q901 are compositionally biased toward basic residues.

This sequence belongs to the SecA family. As to quaternary structure, monomer and homodimer. Part of the essential Sec protein translocation apparatus which comprises SecA, SecYEG and auxiliary proteins SecDF-YajC and YidC. Zn(2+) serves as cofactor.

Its subcellular location is the cell inner membrane. It is found in the cytoplasm. It carries out the reaction ATP + H2O + cellular proteinSide 1 = ADP + phosphate + cellular proteinSide 2.. Functionally, part of the Sec protein translocase complex. Interacts with the SecYEG preprotein conducting channel. Has a central role in coupling the hydrolysis of ATP to the transfer of proteins into and across the cell membrane, serving both as a receptor for the preprotein-SecB complex and as an ATP-driven molecular motor driving the stepwise translocation of polypeptide chains across the membrane. The protein is Protein translocase subunit SecA of Escherichia coli (strain 55989 / EAEC).